We begin with the raw amino-acid sequence, 331 residues long: Glyceraldehyde-3-phosphate dehydrogenase (331 aa).

Residues 12–13 (RI), Asp-34, Arg-78, and Thr-120 contribute to the NAD(+) site. Residues 149–151 (SCT), Thr-180, 209–210 (TG), and Arg-232 contribute to the D-glyceraldehyde 3-phosphate site. Cys-150 serves as the catalytic Nucleophile. An NAD(+)-binding site is contributed by Asn-314.

It belongs to the glyceraldehyde-3-phosphate dehydrogenase family. In terms of assembly, homotetramer.

The protein resides in the cytoplasm. The enzyme catalyses D-glyceraldehyde 3-phosphate + phosphate + NAD(+) = (2R)-3-phospho-glyceroyl phosphate + NADH + H(+). Its pathway is carbohydrate degradation; glycolysis; pyruvate from D-glyceraldehyde 3-phosphate: step 1/5. Functionally, catalyzes the oxidative phosphorylation of glyceraldehyde 3-phosphate (G3P) to 1,3-bisphosphoglycerate (BPG) using the cofactor NAD. The first reaction step involves the formation of a hemiacetal intermediate between G3P and a cysteine residue, and this hemiacetal intermediate is then oxidized to a thioester, with concomitant reduction of NAD to NADH. The reduced NADH is then exchanged with the second NAD, and the thioester is attacked by a nucleophilic inorganic phosphate to produce BPG. This is Glyceraldehyde-3-phosphate dehydrogenase (gapA) from Escherichia fergusonii (strain ATCC 35469 / DSM 13698 / CCUG 18766 / IAM 14443 / JCM 21226 / LMG 7866 / NBRC 102419 / NCTC 12128 / CDC 0568-73).